The sequence spans 287 residues: PIH1 domain-containing protein 1 (287 aa).

The protein belongs to the PIH1 family.

It is found in the nucleus. Its function is as follows. Involved in the assembly of C/D box small nucleolar ribonucleoprotein (snoRNP) particles. Recruits the SWI/SNF complex to the core promoter of rRNA genes and enhances pre-rRNA transcription. Mediates interaction of TELO2 with the R2TP complex which is necessary for the stability of MTOR and SMG1. Positively regulates the assembly and activity of the mTORC1 complex. The polypeptide is PIH1 domain-containing protein 1 (pih1d1) (Danio rerio (Zebrafish)).